Here is a 610-residue protein sequence, read N- to C-terminus: ATP-dependent zinc metalloprotease FtsH (610 aa).

At 1 to 3 the chain is on the cytoplasmic side; the sequence is MAK. The helical transmembrane segment at 4–24 threads the bilayer; it reads NLMLWLVIAVVLMSIFQNFSA. Over 25–97 the chain is Extracellular; that stretch reads NNINNRKIDY…IIGAAPEEQS (73 aa). Residues 98 to 118 form a helical membrane-spanning segment; sequence FFTAIFISWFPMLLLIGVWVF. Over 119–610 the chain is Cytoplasmic; the sequence is FMRQMQVGGG…SNICTDDDNN (492 aa). 192 to 199 is an ATP binding site; that stretch reads GPPGTGKT. His-414 contributes to the Zn(2+) binding site. Glu-415 is an active-site residue. His-418 and Asp-492 together coordinate Zn(2+).

The protein in the central section; belongs to the AAA ATPase family. This sequence in the C-terminal section; belongs to the peptidase M41 family. As to quaternary structure, homohexamer. The cofactor is Zn(2+).

The protein localises to the cell membrane. Acts as a processive, ATP-dependent zinc metallopeptidase for both cytoplasmic and membrane proteins. Plays a role in the quality control of integral membrane proteins. This Buchnera aphidicola subsp. Baizongia pistaciae (strain Bp) protein is ATP-dependent zinc metalloprotease FtsH.